Here is a 267-residue protein sequence, read N- to C-terminus: Thiamine pyrophosphokinase 3 (267 aa).

This sequence belongs to the thiamine pyrophosphokinase family.

It is found in the cytoplasm. It localises to the cytosol. The enzyme catalyses thiamine + ATP = thiamine diphosphate + AMP + H(+). It participates in cofactor biosynthesis; thiamine diphosphate biosynthesis; thiamine diphosphate from thiamine: step 1/1. Functionally, catalyzes the phosphorylation of thiamine to thiamine pyrophosphate (TPP). TPP is an active cofactor for enzymes involved in glycolysis and energy production. Plant leaves require high levels of TPP for photosynthesis and carbohydrate metabolism. The polypeptide is Thiamine pyrophosphokinase 3 (TPK3) (Oryza sativa subsp. japonica (Rice)).